The primary structure comprises 85 residues: Antitoxin VapB31 (85 aa).

Antitoxin component of a type II toxin-antitoxin (TA) system. Upon expression in M.smegmatis neutralizes the effect of cognate toxin VapC31. In Mycobacterium tuberculosis (strain ATCC 25618 / H37Rv), this protein is Antitoxin VapB31 (vapB31).